The primary structure comprises 711 residues: Polyribonucleotide nucleotidyltransferase (711 aa).

Mg(2+) is bound by residues D486 and D492. The region spanning 553-612 is the KH domain; the sequence is PRIHTIKINPDKIKDVIGKGGSVIRALTEETGTTIEIEDDGTVKIAATDGEKAKNAIRRI. The S1 motif domain occupies 622–690; that stretch reads GRVYNGKVTR…RQGRIRLSIK (69 aa). The tract at residues 689-711 is disordered; that stretch reads IKEATEQSQPAAAPEAPAAEQGE. Over residues 694–711 the composition is skewed to low complexity; it reads EQSQPAAAPEAPAAEQGE.

This sequence belongs to the polyribonucleotide nucleotidyltransferase family. Component of the RNA degradosome, which is a multiprotein complex involved in RNA processing and mRNA degradation. Mg(2+) is required as a cofactor.

The protein resides in the cytoplasm. The catalysed reaction is RNA(n+1) + phosphate = RNA(n) + a ribonucleoside 5'-diphosphate. Functionally, involved in mRNA degradation. Catalyzes the phosphorolysis of single-stranded polyribonucleotides processively in the 3'- to 5'-direction. In Escherichia fergusonii (strain ATCC 35469 / DSM 13698 / CCUG 18766 / IAM 14443 / JCM 21226 / LMG 7866 / NBRC 102419 / NCTC 12128 / CDC 0568-73), this protein is Polyribonucleotide nucleotidyltransferase.